The sequence spans 298 residues: Phosphatidylserine decarboxylase proenzyme (298 aa).

Active-site charge relay system; for autoendoproteolytic cleavage activity residues include D113, H169, and S256. S256 functions as the Schiff-base intermediate with substrate; via pyruvic acid; for decarboxylase activity in the catalytic mechanism. The residue at position 256 (S256) is a Pyruvic acid (Ser); by autocatalysis.

The protein belongs to the phosphatidylserine decarboxylase family. PSD-B subfamily. Prokaryotic type II sub-subfamily. Heterodimer of a large membrane-associated beta subunit and a small pyruvoyl-containing alpha subunit. Pyruvate is required as a cofactor. In terms of processing, is synthesized initially as an inactive proenzyme. Formation of the active enzyme involves a self-maturation process in which the active site pyruvoyl group is generated from an internal serine residue via an autocatalytic post-translational modification. Two non-identical subunits are generated from the proenzyme in this reaction, and the pyruvate is formed at the N-terminus of the alpha chain, which is derived from the carboxyl end of the proenzyme. The autoendoproteolytic cleavage occurs by a canonical serine protease mechanism, in which the side chain hydroxyl group of the serine supplies its oxygen atom to form the C-terminus of the beta chain, while the remainder of the serine residue undergoes an oxidative deamination to produce ammonia and the pyruvoyl prosthetic group on the alpha chain. During this reaction, the Ser that is part of the protease active site of the proenzyme becomes the pyruvoyl prosthetic group, which constitutes an essential element of the active site of the mature decarboxylase.

The protein localises to the cell membrane. It catalyses the reaction a 1,2-diacyl-sn-glycero-3-phospho-L-serine + H(+) = a 1,2-diacyl-sn-glycero-3-phosphoethanolamine + CO2. It participates in phospholipid metabolism; phosphatidylethanolamine biosynthesis; phosphatidylethanolamine from CDP-diacylglycerol: step 2/2. In terms of biological role, catalyzes the formation of phosphatidylethanolamine (PtdEtn) from phosphatidylserine (PtdSer). The protein is Phosphatidylserine decarboxylase proenzyme of Desulfitobacterium hafniense (strain DSM 10664 / DCB-2).